A 628-amino-acid polypeptide reads, in one-letter code: Very-long-chain aldehyde decarbonylase GL1-2 (628 aa).

A run of 5 helical transmembrane segments spans residues 37–57, 131–151, 191–211, 299–319, and 331–351; these read GAAP…ARGL, GWAI…YWAH, VVIG…VGLV, DFVF…PFVL, and FVLL…WCCS. Positions 137 to 277 constitute a Fatty acid hydroxylase domain; sequence LLHVLVAEPL…MPIFDLLGGT (141 aa).

It belongs to the sterol desaturase family. As to quaternary structure, homodimer.

Its subcellular location is the endoplasmic reticulum membrane. The enzyme catalyses a long-chain fatty aldehyde + 2 NADPH + O2 + H(+) = a long-chain alkane + formate + 2 NADP(+) + H2O. Its function is as follows. Aldehyde decarbonylase involved in the conversion of aldehydes to alkanes. Core component of a very-long-chain alkane synthesis complex. The chain is Very-long-chain aldehyde decarbonylase GL1-2 from Oryza sativa subsp. indica (Rice).